The following is a 1399-amino-acid chain: DNA-directed RNA polymerase subunit beta' (1399 aa).

Zn(2+) is bound by residues Cys-70, Cys-72, Cys-85, and Cys-88. Asp-460, Asp-462, and Asp-464 together coordinate Mg(2+). Zn(2+)-binding residues include Cys-814, Cys-888, Cys-895, and Cys-898.

Belongs to the RNA polymerase beta' chain family. The RNAP catalytic core consists of 2 alpha, 1 beta, 1 beta' and 1 omega subunit. When a sigma factor is associated with the core the holoenzyme is formed, which can initiate transcription. It depends on Mg(2+) as a cofactor. Zn(2+) is required as a cofactor.

It carries out the reaction RNA(n) + a ribonucleoside 5'-triphosphate = RNA(n+1) + diphosphate. Functionally, DNA-dependent RNA polymerase catalyzes the transcription of DNA into RNA using the four ribonucleoside triphosphates as substrates. This is DNA-directed RNA polymerase subunit beta' from Pseudomonas putida (strain ATCC 47054 / DSM 6125 / CFBP 8728 / NCIMB 11950 / KT2440).